Consider the following 88-residue polypeptide: uncharacterized protein (88 aa).

This is an uncharacterized protein from Escherichia coli (strain K12).